The chain runs to 512 residues: Glutathione-binding protein GsiB (512 aa).

The first 26 residues, 1-26 (MARAVHRSGLVALGIVTALMASCAFA), serve as a signal peptide directing secretion.

Belongs to the bacterial solute-binding protein 5 family. In terms of assembly, the complex is composed of two ATP-binding proteins (GsiA), two transmembrane proteins (GsiC and GsiD) and a solute-binding protein (GsiB).

The protein localises to the periplasm. Part of the ABC transporter complex GsiABCD involved in glutathione import. Binds glutathione. This chain is Glutathione-binding protein GsiB, found in Shigella dysenteriae serotype 1 (strain Sd197).